The primary structure comprises 1375 residues: MLDNKLGNRLRVDFSNISKQIEIPNLLQLQKKSFDYFLNLDNGESGIEKVFKSIFPIHDPQNRLSLEYVSSEIGKPKYTIRECMERGLTYSVNLKMKIRLTLHEKDEKTGEKVGVKDIKEQEIYIREIPLMTDRVSFIINGVERVVVNQLHRSPGVIFKEEESSTVANKLVYTAQIIPDRGSWLYFEYDAKDVLYVRINKRRKVPVTMLFRALGYKKQDIIKLFYPIQTIHVKKDKFLTEFNPNDFMDRIEYDIKDEKGKIVHQAGKRLTKKKAEQLIKDGLKWIEYPVEILLNRYLANPIIDKESGEVLFDSLTLLDESKLAKIKEQKSFDIANDLANGVDAAIINSFAQDGETLKLLKQSENIDDENDLAAIRIYKVMRPGEPVVKDAAKAFVNDLFFNPERYDLTKVGRMKMNHKLGLEVPEYVTVLTNEDIIKTAKYLIKVKNGKGHIDDRDHLGNRRIRSIGELLANELHLGLAKMQKAIRDKFTSLNADLDKVMPYDLINPKMITTTIIEFFTGGQLSQFMDQTNPLSEVTHKRRLSALGEGGLVKERAGFEVRDVHATHYGRICPVETPEGQNIGLINTLSTYAKVNELGFVEAPYRKVVNGKVTNEVVYLTATQEEGLFIAPASTKVDAKGNIVEEFVEARQDGETILARREEVQLIDLCSGMVVGVAASLIPFLEHDDANRALMGSNMQRQAVPLLTASAPIVGTGMEQIIARDAWEAVKAKRGGVVEKVDNKSIFILGEDDKGPFIDHYTMEKNLRTNQNTNYIQHPIVKKGDIVKAGQIIADGPSMDQGELAIGKNALIAFMPWNGYNYEDAIVVSERIIREDTFTSVHIYEKEIEARELKDGIEEITKDIPNVKEEDVAHLDESGIAKIGTHIKPGMILVGKVSPKGEVKPTPEERLLRAIFGEKAGHVVNKSLYATASLEGVVVDVKIFTKKGYEKDDRAIKSYDKEKMALEKEHHDRLLMMDREEMLRVCALLSKAPLNSDQKIGDKNYKKGQTADISELEKINRFTLTTLIKAYSKEIQKEYDDLKNHFQNEKKKLKAEHDEKLEILEKDDILPSGVIKLVKVYIATKRKLKVGDKMAGRHGNKGIVSTIVPEVDMPYLPNGKSVDIALNPLGVPSRMNIGQILESHLGLIGLRLGDQIQEIFDRKQKDFLKELRAKMLEICSIPRLASEKEFIKSLSDEELLNYARDWSKGVKFATPVFEGVNIEEFSKLFEMAKIDMDGKTELYDGRTGEKIAERVHVGCMYMLKLHHLVDEKVHARSTGPYSLVTQQPVGGKALFGGQRFGEMEVWALEAYGAAHTLREMLTIKSDDVEGRFSAYKALTKGENVPATGIPETFFVLTNELKSLALDVEIFDKDEDNE.

Belongs to the RNA polymerase beta chain family. In terms of assembly, the RNAP catalytic core consists of 2 alpha, 1 beta, 1 beta' and 1 omega subunit. When a sigma factor is associated with the core the holoenzyme is formed, which can initiate transcription.

It catalyses the reaction RNA(n) + a ribonucleoside 5'-triphosphate = RNA(n+1) + diphosphate. In terms of biological role, DNA-dependent RNA polymerase catalyzes the transcription of DNA into RNA using the four ribonucleoside triphosphates as substrates. The protein is DNA-directed RNA polymerase subunit beta of Campylobacter jejuni subsp. jejuni serotype O:6 (strain 81116 / NCTC 11828).